A 259-amino-acid chain; its full sequence is Thiazole synthase (259 aa).

Lys-98 (schiff-base intermediate with DXP) is an active-site residue. Residues Gly-159, 185-186 (AG), and 207-208 (NS) each bind 1-deoxy-D-xylulose 5-phosphate.

Belongs to the ThiG family. As to quaternary structure, homotetramer. Forms heterodimers with either ThiH or ThiS.

The protein resides in the cytoplasm. The enzyme catalyses [ThiS sulfur-carrier protein]-C-terminal-Gly-aminoethanethioate + 2-iminoacetate + 1-deoxy-D-xylulose 5-phosphate = [ThiS sulfur-carrier protein]-C-terminal Gly-Gly + 2-[(2R,5Z)-2-carboxy-4-methylthiazol-5(2H)-ylidene]ethyl phosphate + 2 H2O + H(+). The protein operates within cofactor biosynthesis; thiamine diphosphate biosynthesis. In terms of biological role, catalyzes the rearrangement of 1-deoxy-D-xylulose 5-phosphate (DXP) to produce the thiazole phosphate moiety of thiamine. Sulfur is provided by the thiocarboxylate moiety of the carrier protein ThiS. In vitro, sulfur can be provided by H(2)S. The polypeptide is Thiazole synthase (Chlorobium phaeovibrioides (strain DSM 265 / 1930) (Prosthecochloris vibrioformis (strain DSM 265))).